An 86-amino-acid polypeptide reads, in one-letter code: MANIKSQEKRIRTNERARLRNQATKSSLRTAIRGLREAIAEGDKEKAGELLVSTSRKLDKAVTKGVIHKNQAANKKSALALALNKL.

Residues 1 to 18 (MANIKSQEKRIRTNERAR) show a composition bias toward basic and acidic residues. A disordered region spans residues 1–25 (MANIKSQEKRIRTNERARLRNQATK).

Belongs to the bacterial ribosomal protein bS20 family.

Functionally, binds directly to 16S ribosomal RNA. The sequence is that of Small ribosomal subunit protein bS20 from Mycobacteroides abscessus (strain ATCC 19977 / DSM 44196 / CCUG 20993 / CIP 104536 / JCM 13569 / NCTC 13031 / TMC 1543 / L948) (Mycobacterium abscessus).